We begin with the raw amino-acid sequence, 75 residues long: Large ribosomal subunit protein bL28c (75 aa).

It belongs to the bacterial ribosomal protein bL28 family.

The protein localises to the plastid. It is found in the chloroplast. This is Large ribosomal subunit protein bL28c from Cyanidioschyzon merolae (strain NIES-3377 / 10D) (Unicellular red alga).